Here is a 245-residue protein sequence, read N- to C-terminus: MGRAFEYRKATKLKRWGNMARTFTRIGKQIAIAVKAGGPDPENNPHLRAVVATAKRENMPKDNVERAIKNAMGKDQKDYKEMNYEGYGPFGIAVFVETATDNTTRTVANVRSVFNKFGGTLGTSGSLDFMFSWKSMFTITKKEGVDMDDLILELIDYGVEEEYDEDEDEITLYGDPKSFAQIQKYLEENGFEVKGAEFTRIPNDEKDLTPEQRATIDKMVERLEEDEDVQNVYTNMKPADNEGEE.

Residues glutamate 225 to glutamate 245 form a disordered region.

This sequence belongs to the TACO1 family.

The protein resides in the cytoplasm. The protein is Probable transcriptional regulatory protein BF2589 of Bacteroides fragilis (strain ATCC 25285 / DSM 2151 / CCUG 4856 / JCM 11019 / LMG 10263 / NCTC 9343 / Onslow / VPI 2553 / EN-2).